We begin with the raw amino-acid sequence, 950 residues long: MTWRMGPRFTMLLAMWLVCGSEPHPHATIRGSHGGRKVPLVSPDSSRPARFLRHTGRSRGIERSTLEEPNLQPLQRRRSVPVLRLARPTEPPARSDINGAAVRPEQRPAARGSPREMIRDEGSSARSRMLRFPSGSSSPNILASFAGKNRVWVISAPHASEGYYRLMMSLLKDDVYCELAERHIQQIVLFHQAGEEGGKVRRITSEGQILEQPLDPSLIPKLMSFLKLEKGKFGMVLLKKTLQVEERYPYPVRLEAMYEVIDQGPIRRIEKIRQKGFVQKCKASGVEGQVVAEGNDGGGGAGRPSLGSEKKKEDPRRAQVPPTRESRVKVLRKLAATAPALPQPPSTPRATTLPPAPATTVTRSTSRAVTVAARPMTTTAFPTTQRPWTPSPSHRPPTTTEVITARRPSVSENLYPPSRKDQHRERPQTTRRPSKATSLESFTNAPPTTISEPSTRAAGPGRFRDNRMDRREHGHRDPNVVPGPPKPAKEKPPKKKAQDKILSNEYEEKYDLSRPTASQLEDELQVGNVPLKKAKESKKHEKLEKPEKEKKKKMKNENADKLLKSEKQMKKSEKKSKQEKEKSKKKKGGKTEQDGYQKPTNKHFTQSPKKSVADLLGSFEGKRRLLLITAPKAENNMYVQQRDEYLESFCKMATRKISVITIFGPVNNSTMKIDHFQLDNEKPMRVVDDEDLVDQRLISELRKEYGMTYNDFFMVLTDVDLRVKQYYEVPITMKSVFDLIDTFQSRIKDMEKQKKEGIVCKEDKKQSLENFLSRFRWRRRLLVISAPNDEDWAYSQQLSALSGQACNFGLRHITILKLLGVGEEVGGVLELFPINGSSVVEREDVPAHLVKDIRNYFQVSPEYFSMLLVGKDGNVKSWYPSPMWSMVIVYDLIDSMQLRRQEMAIQQSLGMRCPEDEYAGYGYHSYHQGYQDGYQDDYRHHESYHHGYPY.

The first 21 residues, Met1–Ser21, serve as a signal peptide directing secretion. 3 disordered regions span residues Thr28–Ser64, Pro88–Arg119, and Gln289–Lys609. Composition is skewed to basic and acidic residues over residues Pro104–Arg119 and Ser308–Arg317. Over residues Pro348 to Arg374 the composition is skewed to low complexity. Positions Met376–Gln385 are enriched in polar residues. Residues Ser418–Gln428 are compositionally biased toward basic and acidic residues. The segment covering Lys435–Ser454 has biased composition (polar residues). Basic and acidic residues-rich tracts occupy residues Arg462–Pro478, Pro487–Asp499, and Lys538–Lys582. Glycyl lysine isopeptide (Lys-Gly) (interchain with G-Cter in SUMO2) cross-links involve residues Lys545 and Lys548. A coiled-coil region spans residues Asp560 to Lys587. Residues Lys598–Lys609 are compositionally biased toward polar residues.

Belongs to the CCDC80 family. As to quaternary structure, binds to various extracellular matrix proteins. Post-translationally, phosphorylated. In terms of tissue distribution, expressed in dermal papilla and dermal fibroblasts (at protein level). Expressed in heart, thymus, placenta, pancreas, colon, epithelium, spleen and osteoblasts.

The protein resides in the secreted. It is found in the extracellular space. It localises to the extracellular matrix. Promotes cell adhesion and matrix assembly. This chain is Coiled-coil domain-containing protein 80 (CCDC80), found in Homo sapiens (Human).